We begin with the raw amino-acid sequence, 383 residues long: Small ribosomal subunit protein mS31 (383 aa).

The transit peptide at 1–21 (MLRSLCSIAVRLGGARQPRLL) directs the protein to the mitochondrion. Residues 158 to 187 (VNEAQIKLQEQRKALLNDVREKVEQEEVEE) are a coiled coil.

The protein belongs to the mitochondrion-specific ribosomal protein mS31 family. In terms of assembly, component of the mitochondrial ribosome small subunit (28S) which comprises a 12S rRNA and about 30 distinct proteins.

Its subcellular location is the mitochondrion. The sequence is that of Small ribosomal subunit protein mS31 (mrps-31) from Caenorhabditis elegans.